We begin with the raw amino-acid sequence, 83 residues long: MYB-like transcription factor ETC1 (83 aa).

One can recognise a Myb-like domain in the interval 35 to 72 (AQEEEDLICRMYKLVGERWDLIAGRIPGRTAEEIERFW).

Expressed in developing trichomes and non-root hair cells.

Its subcellular location is the nucleus. Functionally, MYB-type transcription factor involved in epidermal cell fate specification. Acts as a negative regulator of trichome development, by mediating lateral inhibition. Promotes the formation of hair developing cells in H position in root epidermis, probably by inhibiting non-hair cell formation. This chain is MYB-like transcription factor ETC1 (ETC1), found in Arabidopsis thaliana (Mouse-ear cress).